A 358-amino-acid polypeptide reads, in one-letter code: Nuclear receptor subfamily 1 group I member 3 (358 aa).

The nuclear receptor DNA-binding region spans 18–93 (PRNCVVCGDR…VGMRKDMILS (76 aa)). Residues 21 to 41 (CVVCGDRATGYHFHALTCEGC) form an NR C4-type zinc finger. Threonine 48 bears the Phosphothreonine; by PKC mark. The segment at 57 to 81 (CPFAGRCEVSKAQRRHCPACRLQKC) adopts an NR C4-type zinc-finger fold. Residues 119–358 (QQKELVQILL…MTPLLGEICS (240 aa)) enclose the NR LBD domain.

This sequence belongs to the nuclear hormone receptor family. NR1 subfamily. Heterodimer of NR1I3 and RXR. Interacts with PSMC4. Interacts with ECT2. Directly interacts with DNAJC7; this complex may also include HSP90. Interacts with CRY1. Interacts with CRY2 in a ligand-dependent manner. Post-translationally, phosphorylated at Thr-48 by PKC, dephosphorylation of Thr-48 is required for nuclear translocation and activation. As to expression, predominantly expressed in liver.

The protein resides in the nucleus. Its subcellular location is the cytoplasm. It is found in the cytoskeleton. Functionally, binds and transactivates the retinoic acid response elements that control expression of the retinoic acid receptor beta 2 and alcohol dehydrogenase 3 genes. Transactivates both the phenobarbital responsive element module of the human CYP2B6 gene and the CYP3A4 xenobiotic response element. The chain is Nuclear receptor subfamily 1 group I member 3 (Nr1i3) from Mus musculus (Mouse).